Here is a 437-residue protein sequence, read N- to C-terminus: ATP-dependent protease ATPase subunit HslU (437 aa).

Residues V18, 60–65 (GCGKTE), D250, E315, and R387 each bind ATP.

Belongs to the ClpX chaperone family. HslU subfamily. As to quaternary structure, a double ring-shaped homohexamer of HslV is capped on each side by a ring-shaped HslU homohexamer. The assembly of the HslU/HslV complex is dependent on binding of ATP.

It is found in the cytoplasm. Functionally, ATPase subunit of a proteasome-like degradation complex; this subunit has chaperone activity. The binding of ATP and its subsequent hydrolysis by HslU are essential for unfolding of protein substrates subsequently hydrolyzed by HslV. HslU recognizes the N-terminal part of its protein substrates and unfolds these before they are guided to HslV for hydrolysis. The polypeptide is ATP-dependent protease ATPase subunit HslU (Methylobacterium radiotolerans (strain ATCC 27329 / DSM 1819 / JCM 2831 / NBRC 15690 / NCIMB 10815 / 0-1)).